The sequence spans 220 residues: Guanylate kinase (220 aa).

The Guanylate kinase-like domain occupies Gly3 to Thr180. Gly10 to Gly17 is an ATP binding site.

The protein belongs to the guanylate kinase family.

The protein resides in the cytoplasm. It carries out the reaction GMP + ATP = GDP + ADP. Essential for recycling GMP and indirectly, cGMP. This chain is Guanylate kinase, found in Thermus thermophilus (strain ATCC BAA-163 / DSM 7039 / HB27).